Consider the following 587-residue polypeptide: Membrane protein insertase YidC (587 aa).

The next 5 membrane-spanning stretches (helical) occupy residues 5 to 25 (SVIG…FMKP), 365 to 385 (GLII…LSLA), 430 to 450 (LGGC…FYVF), 480 to 500 (LPLY…TVFF), and 516 to 536 (IMIW…PSGL).

It belongs to the OXA1/ALB3/YidC family. Type 1 subfamily. As to quaternary structure, interacts with the Sec translocase complex via SecD. Specifically interacts with transmembrane segments of nascent integral membrane proteins during membrane integration.

The protein resides in the cell inner membrane. Its function is as follows. Required for the insertion and/or proper folding and/or complex formation of integral membrane proteins into the membrane. Involved in integration of membrane proteins that insert both dependently and independently of the Sec translocase complex, as well as at least some lipoproteins. Aids folding of multispanning membrane proteins. This is Membrane protein insertase YidC from Chlorobaculum parvum (strain DSM 263 / NCIMB 8327) (Chlorobium vibrioforme subsp. thiosulfatophilum).